A 294-amino-acid chain; its full sequence is Small ribosomal subunit protein uS2 (294 aa).

Residues 232–245 (RAAEQDKAADDKAQ) show a composition bias toward basic and acidic residues. The interval 232 to 294 (RAAEQDKAAD…GSEEDGEAAN (63 aa)) is disordered. The segment covering 246–265 (EQAAAEAAKPEPAAPAPAAE) has biased composition (low complexity).

It belongs to the universal ribosomal protein uS2 family.

The chain is Small ribosomal subunit protein uS2 from Desulfatibacillum aliphaticivorans.